We begin with the raw amino-acid sequence, 327 residues long: MATCPSIFDALVIGAGPAGLSAALALGRVMRTAAIFDTGVFRNAPANHMHTVPTWDHQSPVAYRQQCITELRQRYNGTIHFANTGVASVKAGKDSDYVVTDEAGKTWMGRKVILATGVKDVMPDVKGYAQAWGRYIFHCLFCHGFEQRGSESAGLLVLDKTILSTEIEIAVHFGHLALQFAKKITVFLDGHVEFLEDPRIKGLEAQGFLINPKPISKITYAADPEPGFATVHLEDGSEENMSFLVHRPRTLLAGDFANQLGLELTEAGDVKTTPPFYETSVKGVFAAGDCAVPLKQVVWAVSTGVSAGSGVNFQCLGADMAARSKLS.

FAD contacts are provided by residues 15 to 18, 37 to 42, H50, and A115; these read AGPA and DTGVFR. C139 and C142 are joined by a disulfide. FAD-binding positions include D289 and 296 to 297; that span reads QV.

The protein belongs to the class-II pyridine nucleotide-disulfide oxidoreductase family. In terms of assembly, homodimer. It depends on FAD as a cofactor.

It functions in the pathway mycotoxin biosynthesis. Thioredoxin reductase; part of the gene cluster that mediates the biosynthesis of sirodesmin PL, an epipolythiodioxopiperazine (ETP) characterized by a disulfide bridged cyclic dipeptide and that acts as a phytotoxin which is involved in the blackleg didease of canola. SirD catalyzes the O-prenylation of L-tyrosine (L-Tyr) in the presence of dimethylallyl diphosphate (DMAPP) to yield 4-O-dimethylallyl-L-Tyr, and therefore represents probably the first pathway-specific enzyme in the biosynthesis of sirodesmin PL. 4-O-dimethylallyl-L-Tyr, then undergoes condensation with L-Ser in a reaction catalyzed by the non-ribosomal peptide synthase sirP to form the diketopiperazine (DKP) backbone. Further bishydroxylation of the DKP performed by the cytochrome P450 monooxygenase sirC leads to the production of the intermediate phomamide. This step is essential to form the reactive thiol group required for toxicity of sirodesmin PL. The next steps of sirodesmin biosynthesis are not well understood yet, but some predictions could be made from intermediate compounds identification. Phomamide is converted into phomalizarine via oxidation, probably by sirT. Further oxidation, methylation (by sirM or sirN) and reduction steps convert phomalizarine to deacetyl sirodesmin. Finally, acetyltransferase sirH probably acetylates deacetyl sirodesmin to produce sirodesmin PL. This chain is Thioredoxin reductase sirT, found in Leptosphaeria maculans (Blackleg fungus).